The following is a 178-amino-acid chain: Oligoribonuclease (178 aa).

An Exonuclease domain is found at 7–168; that stretch reads LIWIDLEMTG…DDIRESIAEL (162 aa). Tyrosine 128 is a catalytic residue.

This sequence belongs to the oligoribonuclease family.

The protein localises to the cytoplasm. 3'-to-5' exoribonuclease specific for small oligoribonucleotides. The sequence is that of Oligoribonuclease from Pseudomonas savastanoi pv. phaseolicola (strain 1448A / Race 6) (Pseudomonas syringae pv. phaseolicola (strain 1448A / Race 6)).